The following is a 192-amino-acid chain: Small ribosomal subunit protein uS5 (192 aa).

Positions 22–85 (LVDKLVTINR…DRAKRAMIRV (64 aa)) constitute an S5 DRBM domain.

This sequence belongs to the universal ribosomal protein uS5 family. In terms of assembly, part of the 30S ribosomal subunit. Contacts proteins S4 and S8.

In terms of biological role, with S4 and S12 plays an important role in translational accuracy. Functionally, located at the back of the 30S subunit body where it stabilizes the conformation of the head with respect to the body. The sequence is that of Small ribosomal subunit protein uS5 from Gluconacetobacter diazotrophicus (strain ATCC 49037 / DSM 5601 / CCUG 37298 / CIP 103539 / LMG 7603 / PAl5).